Here is a 192-residue protein sequence, read N- to C-terminus: Potassium-transporting ATPase KdpC subunit (192 aa).

Residues 14–34 traverse the membrane as a helical segment; sequence LTGVLVVLCGLIYPAMVTGIA.

This sequence belongs to the KdpC family. The system is composed of three essential subunits: KdpA, KdpB and KdpC.

The protein resides in the cell membrane. In terms of biological role, part of the high-affinity ATP-driven potassium transport (or Kdp) system, which catalyzes the hydrolysis of ATP coupled with the electrogenic transport of potassium into the cytoplasm. This subunit acts as a catalytic chaperone that increases the ATP-binding affinity of the ATP-hydrolyzing subunit KdpB by the formation of a transient KdpB/KdpC/ATP ternary complex. In Bacillus cytotoxicus (strain DSM 22905 / CIP 110041 / 391-98 / NVH 391-98), this protein is Potassium-transporting ATPase KdpC subunit.